Here is a 594-residue protein sequence, read N- to C-terminus: Actin-histidine N-methyltransferase (594 aa).

Residues 1 to 23 are disordered; sequence MGKKSRVKTQKSGTGATASVSPK. Polar residues predominate over residues 10 to 23; sequence QKSGTGATASVSPK. S-adenosyl-L-methionine-binding positions include R75, 104 to 106, R254, 275 to 279, and 325 to 327; these read EGF, DMCNH, and SGF. In terms of domain architecture, SET spans 94–314; sequence EGFEMVSFKE…AGEQIYIFYG (221 aa). Residues 553 to 594 form a disordered region; the sequence is INGENSIPNGTRLEKEDLNQEQSKRVTEDAKEPSDSTEEVKE. Over residues 564–594 the composition is skewed to basic and acidic residues; that stretch reads RLEKEDLNQEQSKRVTEDAKEPSDSTEEVKE.

The protein belongs to the class V-like SAM-binding methyltransferase superfamily. SETD3 actin-histidine methyltransferase family. As to quaternary structure, interacts with MYOD1. In terms of processing, phosphorylated by GSK3B, which is required for recognition by the SCF(FBXW7) complex and subsequent degradation. Ubiquitinated by the SCF(FBXW7) complex following phosphorylation by GSK3B, leading to its degradation by the proteasome.

It localises to the cytoplasm. The protein resides in the nucleus. It catalyses the reaction L-histidyl-[protein] + S-adenosyl-L-methionine = N(tele)-methyl-L-histidyl-[protein] + S-adenosyl-L-homocysteine + H(+). In terms of biological role, protein-histidine N-methyltransferase that specifically mediates 3-methylhistidine (tele-methylhistidine) methylation of actin at 'His-73'. Histidine methylation of actin is required for smooth muscle contraction of the laboring uterus during delivery. Does not have protein-lysine N-methyltransferase activity and probably only catalyzes histidine methylation of actin. In Rhinolophus ferrumequinum (Greater horseshoe bat), this protein is Actin-histidine N-methyltransferase.